We begin with the raw amino-acid sequence, 164 residues long: Large ribosomal subunit protein bL19 (164 aa).

Residues 144–164 are disordered; the sequence is EAEKQTEVQAEPKIEKSEEKK.

It belongs to the bacterial ribosomal protein bL19 family.

In terms of biological role, this protein is located at the 30S-50S ribosomal subunit interface and may play a role in the structure and function of the aminoacyl-tRNA binding site. In Pelagibacter ubique (strain HTCC1062), this protein is Large ribosomal subunit protein bL19.